Here is a 183-residue protein sequence, read N- to C-terminus: Large ribosomal subunit protein uL6 (183 aa).

It belongs to the universal ribosomal protein uL6 family. In terms of assembly, part of the 50S ribosomal subunit.

Its function is as follows. This protein binds to the 23S rRNA, and is important in its secondary structure. It is located near the subunit interface in the base of the L7/L12 stalk, and near the tRNA binding site of the peptidyltransferase center. In Porphyromonas gingivalis (strain ATCC 33277 / DSM 20709 / CIP 103683 / JCM 12257 / NCTC 11834 / 2561), this protein is Large ribosomal subunit protein uL6.